A 465-amino-acid chain; its full sequence is Serine carboxypeptidase 24 (465 aa).

Residues 1–24 (MARTHFIFLLLVALLSTTFPSSSS) form the signal peptide. Residues N54, N105, and N139 are each glycosylated (N-linked (GlcNAc...) asparagine). 3 cysteine pairs are disulfide-bonded: C88–C349, C249–C260, and C285–C317. S181 is a catalytic residue. N-linked (GlcNAc...) asparagine glycosylation is found at N250, N293, and N338. Residues 287 to 316 (AAQQKKNTTGFFVRMKNTLLRRRLVSGYDP) constitute a propeptide, linker peptide. Active-site residues include D386 and H438.

Belongs to the peptidase S10 family. Heterodimer. In terms of processing, N-glycosylated. As to expression, expressed in shoots, leaves, cauline leaves, siliques and flowers. Expressed a low levels in roots and stems.

Its subcellular location is the secreted. The protein localises to the extracellular space. It carries out the reaction Preferential release of a C-terminal arginine or lysine residue.. Completely inhibited by phenylmethylsulfonyl fluoride (PMSF) and partially by leupeptin. Active serine carboxypeptidase with broad substrate preference, including basic and hydrophilic groups. Processes a protein involved in an early event in the brassinosteroid signaling pathway. This is Serine carboxypeptidase 24 (SCPL24) from Arabidopsis thaliana (Mouse-ear cress).